Here is a 234-residue protein sequence, read N- to C-terminus: Myelin protein zero-like protein 3 (234 aa).

The signal sequence occupies residues 1-31 (MQQSGVPGSRGCALCPLLGVLFFQGVYVIFS). One can recognise an Ig-like V-type domain in the interval 32–148 (LEIKADAHVR…NIPATELTVT (117 aa)). Over 32 to 158 (LEIKADAHVR…ERGFGTMLSS (127 aa)) the chain is Extracellular. A disulfide bridge links Cys52 with Cys128. N-linked (GlcNAc...) asparagine glycosylation occurs at Asn123. The chain crosses the membrane as a helical span at residues 159-179 (VALLSILVFIPSTVVVILLLV). The Cytoplasmic segment spans residues 180 to 234 (RMGRKSAGLKKRSKSGYKKSSIEVSDDTDQEGDDCMAKLCVRCAECVDSDYEETY).

The protein belongs to the myelin P0 protein family.

It is found in the membrane. Its function is as follows. Mediates homophilic cell-cell adhesion. In Bos taurus (Bovine), this protein is Myelin protein zero-like protein 3 (MPZL3).